We begin with the raw amino-acid sequence, 253 residues long: Ribosomal RNA small subunit methyltransferase A (253 aa).

H12, L14, G39, E60, D81, and N104 together coordinate S-adenosyl-L-methionine.

This sequence belongs to the class I-like SAM-binding methyltransferase superfamily. rRNA adenine N(6)-methyltransferase family. RsmA subfamily.

The protein localises to the cytoplasm. It catalyses the reaction adenosine(1518)/adenosine(1519) in 16S rRNA + 4 S-adenosyl-L-methionine = N(6)-dimethyladenosine(1518)/N(6)-dimethyladenosine(1519) in 16S rRNA + 4 S-adenosyl-L-homocysteine + 4 H(+). Functionally, specifically dimethylates two adjacent adenosines (A1518 and A1519) in the loop of a conserved hairpin near the 3'-end of 16S rRNA in the 30S particle. May play a critical role in biogenesis of 30S subunits. This chain is Ribosomal RNA small subunit methyltransferase A, found in Paracidovorax citrulli (strain AAC00-1) (Acidovorax citrulli).